Here is a 472-residue protein sequence, read N- to C-terminus: Membrane-bound acylglycerophosphatidylinositol O-acyltransferase MBOAT7 (472 aa).

Residues 1–5 (MSPEE) lie on the Cytoplasmic side of the membrane. Residues 6 to 22 (WTYLVVLLISIPIGFLF) traverse the membrane as a helical segment. Residues 23–33 (KKAGPGLKRWG) lie on the Lumenal side of the membrane. The helical transmembrane segment at 34–57 (AAAVGLGLTLFTCGPHTLHSLVTI) threads the bilayer. Residues 58–73 (LGTWALIQAQPCSCHA) lie on the Cytoplasmic side of the membrane. The chain crosses the membrane as a helical span at residues 74–93 (LALAWTFSYLLFFRALSLLG). Over 94–194 (LPTPTPFTNA…VPSLRPLLRR (101 aa)) the chain is Lumenal. A helical membrane pass occupies residues 195-212 (AWPAPLFGLLFLLSSHLF). The Cytoplasmic segment spans residues 213 to 231 (PLEAVREDAFYARPLPARL). Residues 232-261 (FYMIPVFFAFRMRFYVAWIAAECGCIAAGF) traverse the membrane as a helical segment. At 262 to 426 (GAYPVAAKAR…LSLADTLRYW (165 aa)) the chain is on the lumenal side. The N-linked (GlcNAc...) asparagine glycan is linked to N321. Residues 427–447 (ASIYFCIHFLALAALGLGLAL) traverse the membrane as a helical segment. Residues 448-472 (GGGSPSRRKAASQPTSLAPEKLREE) are Cytoplasmic-facing. The interval 453–472 (SRRKAASQPTSLAPEKLREE) is disordered.

The protein belongs to the membrane-bound acyltransferase family. Interacts with SPTSSA; the interaction facilitates MBOAT7 location to mitochondria-associated membranes (MAMs). Overexpressed in metastatic breast and bladder carcinomas relative to normal breast epithelium and urothelium.

The protein localises to the endoplasmic reticulum membrane. The catalysed reaction is a 1-acyl-sn-glycero-3-phospho-(1D-myo-inositol) + (5Z,8Z,11Z,14Z)-eicosatetraenoyl-CoA = a 1-acyl-2-(5Z,8Z,11Z,14Z-eicosatetraenoyl)-sn-glycero-3-phospho-(1D-myo-inositol) + CoA. It carries out the reaction (5Z,8Z,11Z,14Z)-eicosatetraenoyl-CoA + 1-hexadecanoyl-sn-glycero-3-phosphocholine = 1-hexadecanoyl-2-(5Z,8Z,11Z,14Z-eicosatetraenoyl)-sn-glycero-3-phosphocholine + CoA. The enzyme catalyses a 1-acyl-sn-glycero-3-phospho-(1D-myo-inositol) + an acyl-CoA = a 1,2-diacyl-sn-glycero-3-phospho-(1D-myo-inositol) + CoA. It catalyses the reaction 1-octadecanoyl-sn-glycero-3-phospho-(1D-myo-inositol) + (5Z,8Z,11Z,14Z)-eicosatetraenoyl-CoA = 1-octadecanoyl-2-(5Z,8Z,11Z,14Z-eicosatetraenoyl)-sn-glycero-3-phospho-(1D-myo-inositol) + CoA. It participates in lipid metabolism; phospholipid metabolism. With respect to regulation, activity is inhibited by thimerosal. In terms of biological role, acyltransferase which catalyzes the transfer of an acyl group from an acyl-CoA to a lysophosphatidylinositol (1-acylglycerophosphatidylinositol or LPI) leading to the production of a phosphatidylinositol (1,2-diacyl-sn-glycero-3-phosphoinositol or PI) and participates in the reacylation step of the phospholipid remodeling pathway also known as the Lands cycle. Prefers arachidonoyl-CoA as the acyl donor, thus contributing to the regulation of free levels arachidonic acid in cell. In liver, participates in the regulation of triglyceride metabolism through the phosphatidylinositol acyl-chain remodeling regulation. In Homo sapiens (Human), this protein is Membrane-bound acylglycerophosphatidylinositol O-acyltransferase MBOAT7.